The chain runs to 200 residues: Holliday junction branch migration complex subunit RuvA (200 aa).

The segment at methionine 1–serine 63 is domain I. Residues serine 64–leucine 142 are domain II. The flexible linker stretch occupies residues glutamine 143–threonine 149. The tract at residues valine 150–serine 200 is domain III.

The protein belongs to the RuvA family. In terms of assembly, homotetramer. Forms an RuvA(8)-RuvB(12)-Holliday junction (HJ) complex. HJ DNA is sandwiched between 2 RuvA tetramers; dsDNA enters through RuvA and exits via RuvB. An RuvB hexamer assembles on each DNA strand where it exits the tetramer. Each RuvB hexamer is contacted by two RuvA subunits (via domain III) on 2 adjacent RuvB subunits; this complex drives branch migration. In the full resolvosome a probable DNA-RuvA(4)-RuvB(12)-RuvC(2) complex forms which resolves the HJ.

It localises to the cytoplasm. Its function is as follows. The RuvA-RuvB-RuvC complex processes Holliday junction (HJ) DNA during genetic recombination and DNA repair, while the RuvA-RuvB complex plays an important role in the rescue of blocked DNA replication forks via replication fork reversal (RFR). RuvA specifically binds to HJ cruciform DNA, conferring on it an open structure. The RuvB hexamer acts as an ATP-dependent pump, pulling dsDNA into and through the RuvAB complex. HJ branch migration allows RuvC to scan DNA until it finds its consensus sequence, where it cleaves and resolves the cruciform DNA. The sequence is that of Holliday junction branch migration complex subunit RuvA from Staphylococcus aureus (strain USA300).